Consider the following 556-residue polypeptide: Hydroxylamine reductase (556 aa).

[4Fe-4S] cluster is bound by residues Cys4, Cys7, Cys19, and Cys26. The hybrid [4Fe-2O-2S] cluster site is built by His252, Glu276, Cys320, Cys407, Cys435, Cys460, Glu494, and Lys496. Cysteine persulfide is present on Cys407.

Belongs to the HCP family. [4Fe-4S] cluster serves as cofactor. Hybrid [4Fe-2O-2S] cluster is required as a cofactor.

The protein localises to the cytoplasm. It catalyses the reaction A + NH4(+) + H2O = hydroxylamine + AH2 + H(+). Functionally, catalyzes the reduction of hydroxylamine to form NH(3) and H(2)O. The protein is Hydroxylamine reductase of Acidithiobacillus ferridurans.